The following is a 430-amino-acid chain: Alpha-1,6-mannosyl-glycoprotein 2-beta-N-acetylglucosaminyltransferase (430 aa).

Residues 1–12 lie on the Cytoplasmic side of the membrane; sequence MANLWKKQRLRD. A helical; Signal-anchor for type II membrane protein membrane pass occupies residues 13–35; that stretch reads TGLCRLGILFAVTLSIVLMLVSV. Residues 36–430 lie on the Lumenal side of the membrane; sequence PRTALNGSSI…YRYSSSSASP (395 aa). Residues asparagine 41 and asparagine 61 are each glycosylated (N-linked (GlcNAc...) asparagine). Residues 104–108 and aspartate 135 contribute to the substrate site; that span reads YVHNR. Cysteine 177 and cysteine 188 are joined by a disulfide. 205 to 209 is a substrate binding site; that stretch reads SLKHH. Mn(2+) is bound at residue aspartate 237. A disulfide bridge connects residues cysteine 259 and cysteine 262. Residue asparagine 295 is glycosylated (N-linked (GlcNAc...) asparagine). A disulfide bridge links cysteine 310 with cysteine 414. Mn(2+) is bound at residue histidine 345.

This sequence belongs to the glycosyltransferase 16 (GT16) protein family. The cofactor is Mn(2+).

It is found in the golgi apparatus membrane. It catalyses the reaction an N(4)-{beta-D-GlcNAc-(1-&gt;2)-alpha-D-Man-(1-&gt;3)-[alpha-D-Man-(1-&gt;6)]-beta-D-Man-(1-&gt;4)-beta-D-GlcNAc-(1-&gt;4)-beta-D-GlcNAc}-L-asparaginyl-[protein] + UDP-N-acetyl-alpha-D-glucosamine = N(4)-{beta-D-GlcNAc-(1-&gt;2)-alpha-D-Man-(1-&gt;3)-[beta-D-GlcNAc-(1-&gt;2)-alpha-D-Man-(1-&gt;6)]-beta-D-Man-(1-&gt;4)-beta-D-GlcNAc-(1-&gt;4)-beta-D-GlcNAc}-L-asparaginyl-[protein] + UDP + H(+). Its pathway is protein modification; protein glycosylation. In terms of biological role, catalyzes an essential step in the conversion of oligo-mannose and hybrid to complex N-glycans. This chain is Alpha-1,6-mannosyl-glycoprotein 2-beta-N-acetylglucosaminyltransferase, found in Arabidopsis thaliana (Mouse-ear cress).